A 246-amino-acid chain; its full sequence is 23S rRNA (guanosine-2'-O-)-methyltransferase RlmB (246 aa).

Residues Gly-197, Ile-217, and Leu-226 each coordinate S-adenosyl-L-methionine.

The protein belongs to the class IV-like SAM-binding methyltransferase superfamily. RNA methyltransferase TrmH family. RlmB subfamily.

The protein resides in the cytoplasm. It carries out the reaction guanosine(2251) in 23S rRNA + S-adenosyl-L-methionine = 2'-O-methylguanosine(2251) in 23S rRNA + S-adenosyl-L-homocysteine + H(+). Specifically methylates the ribose of guanosine 2251 in 23S rRNA. The sequence is that of 23S rRNA (guanosine-2'-O-)-methyltransferase RlmB from Haemophilus influenzae (strain ATCC 51907 / DSM 11121 / KW20 / Rd).